The chain runs to 382 residues: MIOREX complex component 5 (382 aa).

The transit peptide at 1 to 12 directs the protein to the mitochondrion; that stretch reads MRRTFSQLATRL.

Associates with the mitochondrial ribosome.

The protein localises to the mitochondrion. In terms of biological role, component of MIOREX complexes, large expressome-like assemblies of ribosomes with factors involved in all the steps of post-transcriptional gene expression. This chain is MIOREX complex component 5, found in Saccharomyces cerevisiae (strain ATCC 204508 / S288c) (Baker's yeast).